Consider the following 477-residue polypeptide: Aspartyl/glutamyl-tRNA(Asn/Gln) amidotransferase subunit B (477 aa).

This sequence belongs to the GatB/GatE family. GatB subfamily. In terms of assembly, heterotrimer of A, B and C subunits.

The enzyme catalyses L-glutamyl-tRNA(Gln) + L-glutamine + ATP + H2O = L-glutaminyl-tRNA(Gln) + L-glutamate + ADP + phosphate + H(+). The catalysed reaction is L-aspartyl-tRNA(Asn) + L-glutamine + ATP + H2O = L-asparaginyl-tRNA(Asn) + L-glutamate + ADP + phosphate + 2 H(+). Allows the formation of correctly charged Asn-tRNA(Asn) or Gln-tRNA(Gln) through the transamidation of misacylated Asp-tRNA(Asn) or Glu-tRNA(Gln) in organisms which lack either or both of asparaginyl-tRNA or glutaminyl-tRNA synthetases. The reaction takes place in the presence of glutamine and ATP through an activated phospho-Asp-tRNA(Asn) or phospho-Glu-tRNA(Gln). This is Aspartyl/glutamyl-tRNA(Asn/Gln) amidotransferase subunit B from Streptococcus sanguinis (strain SK36).